A 247-amino-acid chain; its full sequence is Carboxy-S-adenosyl-L-methionine synthase (247 aa).

S-adenosyl-L-methionine-binding positions include Y40, 65–67 (GSS), 90–91 (DN), 122–123 (DI), N137, and R204.

It belongs to the class I-like SAM-binding methyltransferase superfamily. Cx-SAM synthase family. As to quaternary structure, homodimer.

It catalyses the reaction prephenate + S-adenosyl-L-methionine = carboxy-S-adenosyl-L-methionine + 3-phenylpyruvate + H2O. In terms of biological role, catalyzes the conversion of S-adenosyl-L-methionine (SAM) to carboxy-S-adenosyl-L-methionine (Cx-SAM). In Pseudomonas fluorescens (strain ATCC BAA-477 / NRRL B-23932 / Pf-5), this protein is Carboxy-S-adenosyl-L-methionine synthase.